Reading from the N-terminus, the 316-residue chain is Pantothenate kinase (316 aa).

ATP is bound at residue 95–102; the sequence is GSVAVGKS.

Belongs to the prokaryotic pantothenate kinase family.

The protein resides in the cytoplasm. It carries out the reaction (R)-pantothenate + ATP = (R)-4'-phosphopantothenate + ADP + H(+). It participates in cofactor biosynthesis; coenzyme A biosynthesis; CoA from (R)-pantothenate: step 1/5. The protein is Pantothenate kinase of Shewanella pealeana (strain ATCC 700345 / ANG-SQ1).